An 857-amino-acid polypeptide reads, in one-letter code: uncharacterized protein (857 aa).

Disordered regions lie at residues 316–339, 484–561, 619–777, and 809–836; these read PPAPSLEQPENKTMPEIKEGTKEN, AKQP…PRTN, GQFP…PKPQ, and EQRPEREAMKRQAQQERENAVKNPSTGK. Basic and acidic residues-rich tracts occupy residues 324–339, 518–534, and 630–640; these read PENKTMPEIKEGTKEN, KKTEELKQSRNTAKAEE, and QRAESSIDKDC. Residues 683 to 700 show a composition bias toward polar residues; it reads RTTTVQPHSHSAQPTTLR. The span at 708–725 shows a compositional bias: low complexity; that stretch reads SSSLIASAKPAPPISSSS. A compositionally biased stretch (polar residues) spans 726–738; that stretch reads TGPNVTNPNQSSA. Over residues 809 to 828 the composition is skewed to basic and acidic residues; the sequence is EQRPEREAMKRQAQQERENA.

This is an uncharacterized protein from Mus musculus (Mouse).